The sequence spans 331 residues: Polysaccharide lyase (331 aa).

Positions 1–22 (MSLPLRLALLPTLLASASAFAA) are cleaved as a signal peptide. Cysteine 23 carries the N-palmitoyl cysteine lipid modification. Residue cysteine 23 is the site of S-diacylglycerol cysteine attachment.

Belongs to the polysaccharide lyase 5 family.

Its subcellular location is the cell outer membrane. The catalysed reaction is Eliminative cleavage of alginate to give oligosaccharides with 4-deoxy-alpha-L-erythro-hex-4-enuronosyl groups at their non-reducing ends and beta-D-mannuronate at their reducing end.. The enzyme catalyses [hyaluronan](n) = n 3-(4-deoxy-beta-D-gluc-4-enuronosyl)-N-acetyl-D-glucosamine + H2O. It catalyses the reaction Eliminative cleavage of (1-&gt;4)-beta-D-glucuronans to give oligosaccharides with 4-deoxy-beta-D-gluc-4-enuronosyl groups at their non-reducing ends. Complete degradation of glucuronans results in the formation of tetrasaccharides.. Its activity is regulated as follows. Is inhibited by mono- and divalent cations as well as L-ascorbic acid 6-hexadecanoate. Its function is as follows. Polysaccharide lyase that catalyzes the depolymerization of several anionic polysaccharides via a beta-elimination mechanism. Exhibits broad substrate specificity, catalyzing the degradation of not only alginate and poly-beta-D-mannuronate (poly-ManA), but poly-beta-D-glucuronate (poly-GlcA or poly-GlcUA) and hyaluronate (HA) as well. The oligosaccharide products formed by enzymatic cleavage are comprised mainly of disaccharides, with a lower abundance of trimers and pentamers. Is not active on poly-D-galacturonate, heparin and heparin sulfate. This is Polysaccharide lyase from Stenotrophomonas maltophilia (strain K279a).